The following is a 142-amino-acid chain: MSQAVNAKKRVFKTHSYRGVDLEKLLEMSTEDFVKLAPARVRRRFARGMTSKPAGFMKKLRAAKLAAPENEKPAPVRTHMRNMIIVPEMIGSVVGIYNGKAFNQVEIRPEMLGHYLGEFSITYTPVRHGRAGATTSRFIPLK.

Position 2 is an N-acetylserine (S2). Residues K24, K35, and K64 each participate in a glycyl lysine isopeptide (Lys-Gly) (interchain with G-Cter in ubiquitin) cross-link.

It belongs to the universal ribosomal protein uS19 family. In terms of assembly, component of the small ribosomal subunit (SSU). Mature yeast ribosomes consist of a small (40S) and a large (60S) subunit. The 40S small subunit contains 1 molecule of ribosomal RNA (18S rRNA) and 33 different proteins (encoded by 57 genes). The large 60S subunit contains 3 rRNA molecules (25S, 5.8S and 5S rRNA) and 46 different proteins (encoded by 81 genes).

It is found in the cytoplasm. Component of the ribosome, a large ribonucleoprotein complex responsible for the synthesis of proteins in the cell. The small ribosomal subunit (SSU) binds messenger RNAs (mRNAs) and translates the encoded message by selecting cognate aminoacyl-transfer RNA (tRNA) molecules. The large subunit (LSU) contains the ribosomal catalytic site termed the peptidyl transferase center (PTC), which catalyzes the formation of peptide bonds, thereby polymerizing the amino acids delivered by tRNAs into a polypeptide chain. The nascent polypeptides leave the ribosome through a tunnel in the LSU and interact with protein factors that function in enzymatic processing, targeting, and the membrane insertion of nascent chains at the exit of the ribosomal tunnel. uS19 is involved in the nuclear export of the small ribosomal subunit precursor. Has a role in the late stage of the assembly of pre-40S particles within the nucleus and controls their export to the cytoplasm. This is Small ribosomal subunit protein uS19 from Saccharomyces cerevisiae (strain ATCC 204508 / S288c) (Baker's yeast).